Consider the following 893-residue polypeptide: TBC domain-containing protein kinase-like protein (893 aa).

A Protein kinase domain is found at 1–273 (MFPLKDAEMG…PDQLMKDKVF (273 aa)). Residues 466–651 (DIPPLMRGLT…HLWDTLLLGN (186 aa)) enclose the Rab-GAP TBC domain. A disordered region spans residues 710–749 (YRQHAQPPKPSSDSSGGRSSAPYFSAECPDPPKTDLSRES). Positions 720-729 (SSDSSGGRSS) are enriched in low complexity. A Rhodanese domain is found at 790 to 889 (SKPKLLVVDI…IKPTGLLTIP (100 aa)).

This sequence belongs to the protein kinase superfamily. Component of the FERRY complex composed of five subunits, TBCK, PPP1R21, FERRY3, CRYZL1 and GATD1 with a ratio of 1:2:1:2:4, respectively.

The protein localises to the cytoplasm. It localises to the cytoskeleton. The protein resides in the spindle. Its subcellular location is the midbody. It is found in the early endosome. Functionally, component of the FERRY complex (Five-subunit Endosomal Rab5 and RNA/ribosome intermediary). The FERRY complex directly interacts with mRNAs and RAB5A, and functions as a RAB5A effector involved in the localization and the distribution of specific mRNAs most likely by mediating their endosomal transport. The complex recruits mRNAs and ribosomes to early endosomes through direct mRNA-interaction. Also involved in the modulation of mTOR signaling and expression of mTOR complex components. Involved in the control of actin-cytoskeleton organization. The protein is TBC domain-containing protein kinase-like protein of Homo sapiens (Human).